The following is a 245-amino-acid chain: Probable histone chaperone asf-1-like protein (245 aa).

A compositionally biased stretch (acidic residues) spans 157-166 (EDPVAEPVDE). The disordered stretch occupies residues 157–245 (EDPVAEPVDE…SGDVEMGDKH (89 aa)). Residues 167-183 (EANKVFDEDDLMPLHDD) show a composition bias toward basic and acidic residues. Positions 184 to 206 (GQDDDEEEEDDDETGPNTEEVDL) are enriched in acidic residues. The span at 215–245 (ANAHDGTEQKNGEESMEHDGASGDVEMGDKH) shows a compositional bias: basic and acidic residues.

It belongs to the ASF1 family. In terms of assembly, interacts with histone H3 and histone H4.

The protein resides in the nucleus. Histone chaperone that facilitates histone deposition and histone exchange and removal during nucleosome assembly and disassembly. The sequence is that of Probable histone chaperone asf-1-like protein (asfl-1) from Caenorhabditis elegans.